The primary structure comprises 1151 residues: UDP-N-acetylglucosamine--peptide N-acetylglucosaminyltransferase (1151 aa).

TPR repeat units follow at residues 125–158 (LKKV…DPNN), 193–226 (AEAY…KPEF), 227–260 (IDAY…NPDL), 261–294 (YCVR…QPQF), 295–328 (AVAW…DPNF), 329–362 (LDAY…SGNH), 363–396 (AVVH…QPHF), 397–430 (PDAY…CPTH), 431–464 (ADSQ…YPEF), 465–498 (AAAH…APTF), 499–532 (ADAY…NPAF), and 533–566 (ADAH…KPDF). Residues 567–577 (PDAYCNLAHCH) form a TPR 13; truncated repeat. The short motif at 591-607 (RKLVQIVEDQLCKKRLP) is the Nuclear localization signal element. The active-site Proton acceptor is the H612. UDP is bound by residues Q954, K957, 1010-1013 (VAAK), 1016-1019 (HVRR), 1034-1036 (GHT), and D1040.

It belongs to the glycosyltransferase 41 family. O-GlcNAc transferase subfamily.

The protein resides in the nucleus. Its subcellular location is the cytoplasm. It localises to the perinuclear region. The enzyme catalyses L-seryl-[protein] + UDP-N-acetyl-alpha-D-glucosamine = 3-O-(N-acetyl-beta-D-glucosaminyl)-L-seryl-[protein] + UDP + H(+). It catalyses the reaction L-threonyl-[protein] + UDP-N-acetyl-alpha-D-glucosamine = 3-O-(N-acetyl-beta-D-glucosaminyl)-L-threonyl-[protein] + UDP + H(+). It functions in the pathway protein modification; protein glycosylation. In terms of biological role, addition of nucleotide-activated sugars directly onto the polypeptide through O-glycosidic linkage with the hydroxyl of serine or threonine. Influences tap habituation in the mechanosensory neurons cell autonomously. This Caenorhabditis elegans protein is UDP-N-acetylglucosamine--peptide N-acetylglucosaminyltransferase (ogt-1).